We begin with the raw amino-acid sequence, 307 residues long: Holliday junction branch migration complex subunit RuvB (307 aa).

The interval 1–167 (MKLQIKPPNT…FGVILNINYY (167 aa)) is large ATPase domain (RuvB-L). Residues Ile-5, Gly-48, Lys-51, Thr-52, Thr-53, Arg-157, Tyr-167, and Arg-204 each coordinate ATP. Thr-52 serves as a coordination point for Mg(2+). A small ATPAse domain (RuvB-S) region spans residues 168–233 (SNAEIEKMVS…DLEGLFKNLM (66 aa)). Positions 236 to 307 (KNGLQSIDVQ…NSGREYLVNF (72 aa)) are head domain (RuvB-H). Positions 270, 289, and 294 each coordinate DNA.

It belongs to the RuvB family. In terms of assembly, homohexamer. Forms an RuvA(8)-RuvB(12)-Holliday junction (HJ) complex. HJ DNA is sandwiched between 2 RuvA tetramers; dsDNA enters through RuvA and exits via RuvB. An RuvB hexamer assembles on each DNA strand where it exits the tetramer. Each RuvB hexamer is contacted by two RuvA subunits (via domain III) on 2 adjacent RuvB subunits; this complex drives branch migration. In the full resolvosome a probable DNA-RuvA(4)-RuvB(12)-RuvC(2) complex forms which resolves the HJ.

The protein resides in the cytoplasm. The enzyme catalyses ATP + H2O = ADP + phosphate + H(+). In terms of biological role, the RuvA-RuvB-RuvC complex processes Holliday junction (HJ) DNA during genetic recombination and DNA repair, while the RuvA-RuvB complex plays an important role in the rescue of blocked DNA replication forks via replication fork reversal (RFR). RuvA specifically binds to HJ cruciform DNA, conferring on it an open structure. The RuvB hexamer acts as an ATP-dependent pump, pulling dsDNA into and through the RuvAB complex. RuvB forms 2 homohexamers on either side of HJ DNA bound by 1 or 2 RuvA tetramers; 4 subunits per hexamer contact DNA at a time. Coordinated motions by a converter formed by DNA-disengaged RuvB subunits stimulates ATP hydrolysis and nucleotide exchange. Immobilization of the converter enables RuvB to convert the ATP-contained energy into a lever motion, pulling 2 nucleotides of DNA out of the RuvA tetramer per ATP hydrolyzed, thus driving DNA branch migration. The RuvB motors rotate together with the DNA substrate, which together with the progressing nucleotide cycle form the mechanistic basis for DNA recombination by continuous HJ branch migration. Branch migration allows RuvC to scan DNA until it finds its consensus sequence, where it cleaves and resolves cruciform DNA. The polypeptide is Holliday junction branch migration complex subunit RuvB (Mycoplasma genitalium (strain ATCC 33530 / DSM 19775 / NCTC 10195 / G37) (Mycoplasmoides genitalium)).